The primary structure comprises 274 residues: Nuclease (274 aa).

The first 24 residues, 1–24 (MGICGKLGVAALVALIVGCSPVQS), serve as a signal peptide directing secretion. The active-site Proton acceptor is His-124. Mn(2+) contacts are provided by Asn-155, Asp-246, Glu-249, Asp-255, Phe-256, Gln-265, and Glu-269.

The protein belongs to the DNA/RNA non-specific endonuclease family. Monomer. Mn(2+) serves as cofactor. It depends on Mg(2+) as a cofactor. Ca(2+) is required as a cofactor. Requires Co(2+) as cofactor. The N-terminus is blocked.

The protein resides in the periplasm. Functionally, catalyzes the degradation of both RNA and DNA; has the potential to act as an endonuclease. The polypeptide is Nuclease (nucA) (Nostoc sp. (strain PCC 7120 / SAG 25.82 / UTEX 2576)).